A 453-amino-acid polypeptide reads, in one-letter code: Cholecystokinin receptor (453 aa).

Residues 1-64 (MESLRSLSNI…ILDRKKPSPS (64 aa)) are Extracellular-facing. N-linked (GlcNAc...) asparagine glycosylation is found at Asn9, Asn22, Asn30, Asn35, and Asn39. The helical transmembrane segment at 65–94 (DLNLWVRIVMYSVIFLLSVFGNTLIIIVLV) threads the bilayer. Residues 95–104 (MNKRLRTITN) are Cytoplasmic-facing. The chain crosses the membrane as a helical span at residues 105–131 (SFLLSLALSDLMVAVLCMPFTLIPNLM). The Extracellular segment spans residues 132 to 142 (ENFIFGEVICR). An intrachain disulfide couples Cys141 to Cys223. A helical membrane pass occupies residues 143–164 (AAAYFMGLSVSVSTFNLVAISI). Residues 165–184 (ERYSAICNPLKSRVWQTRSH) are Cytoplasmic-facing. A helical transmembrane segment spans residues 185 to 205 (AYRVIAATWVLSSIIMIPYLV). At 206-237 (YNKTVTFPMKDRRVGHQCRLVWPSKQVQQAWY) the chain is on the extracellular side. A helical membrane pass occupies residues 238–261 (VLLLTILFFIPGVVMIVAYGLISR). The Cytoplasmic segment spans residues 262–343 (ELYRGIQFEM…KLMAKKRVIR (82 aa)). The helical transmembrane segment at 344–364 (MLIVIVAMFFICWMPIFVANT) threads the bilayer. At 365-379 (WKAFDELSAFNTLTG) the chain is on the extracellular side. A helical transmembrane segment spans residues 380 to 403 (APISFIHLLSYTSACVNPLIYCFM). A lipid anchor (S-palmitoyl cysteine) is attached at Cys401. The Cytoplasmic portion of the chain corresponds to 404–453 (NKRFRKAFLGTFSSCIKPCRNFRDTDEDIAATGASLSKFSYTTVSSLGPA).

Belongs to the G-protein coupled receptor 1 family. In terms of tissue distribution, brain and stomach.

It localises to the cell membrane. Receptor for cholecystokinin. This receptor mediates its action by association with G proteins that activate a phosphatidylinositol-calcium second messenger system. Has high affinity for CCK-8 and low affinities for gastrin-17-I, CCK-4, and unsulfated CCK-8. This chain is Cholecystokinin receptor (cckar), found in Xenopus laevis (African clawed frog).